The sequence spans 807 residues: Putative histidine biosynthesis bifunctional protein HisCD (807 aa).

Residues 1–440 are histidinol dehydrogenase; that stretch reads MTDHFDTLIR…ALNIAGQGVN (440 aa). The Zn(2+) site is built by glutamine 261 and histidine 264. Residues glutamate 328 and histidine 329 contribute to the active site. Positions 362 and 421 each coordinate Zn(2+). The interval 441-807 is histidinol-phosphate aminotransferase; that stretch reads MNNIFDANLL…VNEQPKEIAN (367 aa). Lysine 655 is subject to N6-(pyridoxal phosphate)lysine.

The protein in the N-terminal section; belongs to the histidinol dehydrogenase family. It in the C-terminal section; belongs to the class-II pyridoxal-phosphate-dependent aminotransferase family. Histidinol-phosphate aminotransferase subfamily. In terms of assembly, homodimer. Zn(2+) serves as cofactor. It depends on pyridoxal 5'-phosphate as a cofactor.

The catalysed reaction is L-histidinol phosphate + 2-oxoglutarate = 3-(imidazol-4-yl)-2-oxopropyl phosphate + L-glutamate. It carries out the reaction L-histidinol + 2 NAD(+) + H2O = L-histidine + 2 NADH + 3 H(+). It participates in amino-acid biosynthesis; L-histidine biosynthesis; L-histidine from 5-phospho-alpha-D-ribose 1-diphosphate: step 7/9. It functions in the pathway amino-acid biosynthesis; L-histidine biosynthesis; L-histidine from 5-phospho-alpha-D-ribose 1-diphosphate: step 9/9. Catalyzes the sequential NAD-dependent oxidations of L-histidinol to L-histidinaldehyde and then to L-histidine. The protein is Putative histidine biosynthesis bifunctional protein HisCD (hisCD) of Photorhabdus laumondii subsp. laumondii (strain DSM 15139 / CIP 105565 / TT01) (Photorhabdus luminescens subsp. laumondii).